The primary structure comprises 286 residues: UDP-3-O-acyl-N-acetylglucosamine deacetylase (286 aa).

Residues His79, His237, and Asp241 each coordinate Zn(2+). The Proton donor role is filled by His264.

Belongs to the LpxC family. Requires Zn(2+) as cofactor.

It carries out the reaction a UDP-3-O-[(3R)-3-hydroxyacyl]-N-acetyl-alpha-D-glucosamine + H2O = a UDP-3-O-[(3R)-3-hydroxyacyl]-alpha-D-glucosamine + acetate. It participates in glycolipid biosynthesis; lipid IV(A) biosynthesis; lipid IV(A) from (3R)-3-hydroxytetradecanoyl-[acyl-carrier-protein] and UDP-N-acetyl-alpha-D-glucosamine: step 2/6. Catalyzes the hydrolysis of UDP-3-O-myristoyl-N-acetylglucosamine to form UDP-3-O-myristoylglucosamine and acetate, the committed step in lipid A biosynthesis. The protein is UDP-3-O-acyl-N-acetylglucosamine deacetylase of Chlamydia trachomatis serovar L2 (strain ATCC VR-902B / DSM 19102 / 434/Bu).